A 312-amino-acid chain; its full sequence is Homoserine kinase (312 aa).

Position 94-104 (94-104) interacts with ATP; sequence PLGRGLGSSAA.

This sequence belongs to the GHMP kinase family. Homoserine kinase subfamily.

It localises to the cytoplasm. The catalysed reaction is L-homoserine + ATP = O-phospho-L-homoserine + ADP + H(+). The protein operates within amino-acid biosynthesis; L-threonine biosynthesis; L-threonine from L-aspartate: step 4/5. Its function is as follows. Catalyzes the ATP-dependent phosphorylation of L-homoserine to L-homoserine phosphate. This Caldanaerobacter subterraneus subsp. tengcongensis (strain DSM 15242 / JCM 11007 / NBRC 100824 / MB4) (Thermoanaerobacter tengcongensis) protein is Homoserine kinase.